A 365-amino-acid chain; its full sequence is Flagellar P-ring protein 2 (365 aa).

An N-terminal signal peptide occupies residues M1–S19.

It belongs to the FlgI family. As to quaternary structure, the basal body constitutes a major portion of the flagellar organelle and consists of four rings (L,P,S, and M) mounted on a central rod.

It localises to the periplasm. Its subcellular location is the bacterial flagellum basal body. Assembles around the rod to form the L-ring and probably protects the motor/basal body from shearing forces during rotation. This chain is Flagellar P-ring protein 2, found in Chromobacterium violaceum (strain ATCC 12472 / DSM 30191 / JCM 1249 / CCUG 213 / NBRC 12614 / NCIMB 9131 / NCTC 9757 / MK).